We begin with the raw amino-acid sequence, 252 residues long: Pyrroloquinoline-quinone synthase (252 aa).

This sequence belongs to the PqqC family.

The enzyme catalyses 6-(2-amino-2-carboxyethyl)-7,8-dioxo-1,2,3,4,7,8-hexahydroquinoline-2,4-dicarboxylate + 3 O2 = pyrroloquinoline quinone + 2 H2O2 + 2 H2O + H(+). The protein operates within cofactor biosynthesis; pyrroloquinoline quinone biosynthesis. Its function is as follows. Ring cyclization and eight-electron oxidation of 3a-(2-amino-2-carboxyethyl)-4,5-dioxo-4,5,6,7,8,9-hexahydroquinoline-7,9-dicarboxylic-acid to PQQ. The polypeptide is Pyrroloquinoline-quinone synthase (Acinetobacter baumannii (strain AB307-0294)).